Reading from the N-terminus, the 156-residue chain is Transcription elongation factor GreA (156 aa).

Residues 12 to 72 (YKKLEDELST…KEIEHELKYA (61 aa)) adopt a coiled-coil conformation.

Belongs to the GreA/GreB family.

Necessary for efficient RNA polymerase transcription elongation past template-encoded arresting sites. The arresting sites in DNA have the property of trapping a certain fraction of elongating RNA polymerases that pass through, resulting in locked ternary complexes. Cleavage of the nascent transcript by cleavage factors such as GreA or GreB allows the resumption of elongation from the new 3'terminus. GreA releases sequences of 2 to 3 nucleotides. The chain is Transcription elongation factor GreA from Dehalococcoides mccartyi (strain ATCC BAA-2266 / KCTC 15142 / 195) (Dehalococcoides ethenogenes (strain 195)).